A 136-amino-acid chain; its full sequence is Large ribosomal subunit protein bL17 (136 aa).

This sequence belongs to the bacterial ribosomal protein bL17 family. Part of the 50S ribosomal subunit. Contacts protein L32.

The sequence is that of Large ribosomal subunit protein bL17 from Rickettsia conorii (strain ATCC VR-613 / Malish 7).